Consider the following 225-residue polypeptide: ATP-dependent dethiobiotin synthetase BioD (225 aa).

An ATP-binding site is contributed by 15–20 (EIGKTF). Position 19 (Thr19) interacts with Mg(2+). Lys40 is an active-site residue. ATP is bound by residues Asp57, 118–121 (EGVG), 178–179 (NR), and 207–209 (PHV). 2 residues coordinate Mg(2+): Asp57 and Glu118.

Belongs to the dethiobiotin synthetase family. As to quaternary structure, homodimer. Mg(2+) serves as cofactor.

The protein localises to the cytoplasm. It catalyses the reaction (7R,8S)-7,8-diammoniononanoate + CO2 + ATP = (4R,5S)-dethiobiotin + ADP + phosphate + 3 H(+). Its pathway is cofactor biosynthesis; biotin biosynthesis; biotin from 7,8-diaminononanoate: step 1/2. Catalyzes a mechanistically unusual reaction, the ATP-dependent insertion of CO2 between the N7 and N8 nitrogen atoms of 7,8-diaminopelargonic acid (DAPA, also called 7,8-diammoniononanoate) to form a ureido ring. In Aromatoleum aromaticum (strain DSM 19018 / LMG 30748 / EbN1) (Azoarcus sp. (strain EbN1)), this protein is ATP-dependent dethiobiotin synthetase BioD.